The chain runs to 392 residues: F-box only protein 5-A (392 aa).

Residues 1–21 (MMCGFASNQSPKKLSSKKSSA) are disordered. Residues 7–20 (SNQSPKKLSSKKSS) show a composition bias toward low complexity. The 48-residue stretch at 197–244 (AELFHRDFKHLLTKILRHLSAMDLINVISVSTTWRKLLQKDNWAYNAY) folds into the F-box domain. Residues 319-367 (SLKVCVDCGSPAKHDPCLHRAICTRESCKLDFCTRCSCKYHFSKSCLMS) form a ZBR-type zinc finger. Residues Cys323, Cys326, Cys341, Cys346, Cys351, Cys354, His359, and Cys364 each contribute to the Zn(2+) site.

As to quaternary structure, part of a SCF (SKP1-cullin-F-box) protein ligase complex. Interacts with btrc. Interacts with skp1. Interacts with cdc20. Interacts with pin1; stabilizes fbxo5 by preventing its association with btrc in an isomerization-dependent pathway; this interaction is present during G2 phase and prevents fbxo5 degradation. Interacts with plk1. Post-translationally, proteolysed; proteolysis is induced by both cyclin B-cdk1 and cyclin A-cdk1/2 complex through probable phosphorylation. Proteolysis is inhibited by pin1 during G2.

The protein resides in the nucleus. The protein localises to the cytoplasm. It is found in the cytoskeleton. It localises to the spindle. Its subcellular location is the microtubule organizing center. The protein resides in the centrosome. It participates in protein modification; protein ubiquitination. Functionally, regulates progression through early mitosis by inhibiting the anaphase promoting complex/cyclosome (APC). Binds to the APC activator cdc20 to prevent APC activation. Can also bind directly to the APC to inhibit substrate-binding. Required to arrest unfertilized eggs at metaphase of meiosis II, by preventing their release from metaphase of meiosis II, through inhibition of APC-dependent cyclin B destruction leading to stabilization of cyclin B-cdk1 complex activity. This is F-box only protein 5-A (fbxo5-a) from Xenopus laevis (African clawed frog).